The primary structure comprises 634 residues: Sodium-dependent neutral amino acid transporter B(0)AT1 (634 aa).

Over M1–Y41 the chain is Cytoplasmic. S17 is modified (phosphoserine). The helical transmembrane segment at M42–C62 threads the bilayer. The Extracellular portion of the chain corresponds to Q63 to G67. A helical transmembrane segment spans residues G68–L88. The Cytoplasmic portion of the chain corresponds to E89 to L120. The chain crosses the membrane as a helical span at residues T121–F141. Residues N142–S192 lie on the Extracellular side of the membrane. 2 N-linked (GlcNAc...) asparagine glycosylation sites follow: N158 and N182. Residues I193–I213 form a helical membrane-spanning segment. The Cytoplasmic segment spans residues R214–K221. A helical transmembrane segment spans residues A222–L242. Residues T243–W268 are Extracellular-facing. The N-linked (GlcNAc...) asparagine glycan is linked to N258. A helical transmembrane segment spans residues L269–F289. The Cytoplasmic portion of the chain corresponds to S290 to V304. A helical transmembrane segment spans residues I305 to I325. At G326–S413 the chain is on the extracellular side. N354 and N368 each carry an N-linked (GlcNAc...) asparagine glycan. The chain crosses the membrane as a helical span at residues P414–G434. Residues N435–E456 lie on the Cytoplasmic side of the membrane. A helical membrane pass occupies residues V457–S477. Topologically, residues G478 to G490 are extracellular. Residues S491 to V511 form a helical membrane-spanning segment. Over D512–Q531 the chain is Cytoplasmic. Residues V532–V552 form a helical membrane-spanning segment. Residues E553–W581 are Extracellular-facing. Residues V582 to I602 traverse the membrane as a helical segment. Residues Y603–Y634 are Cytoplasmic-facing. S627 is subject to Phosphoserine.

The protein belongs to the sodium:neurotransmitter symporter (SNF) (TC 2.A.22) family. SLC6A19 subfamily. Interacts in a tissue-specific manner with ACE2 in small intestine and with CLTRN in the kidney. Interacts with CLTRN; this interaction is required for trafficking of SLC6A19 to the plasma membrane and for its catalytic activation in kidneys. Interacts with ACE2; this interaction is required for trafficking of SLC6A19 to the plasma membrane and for its catalytic activation in intestine. Interacts with ANPEP; the interaction positively regulates its amino acid transporter activity. Robust expression in kidney and small intestine, with minimal expression in pancreas. Also expressed in stomach, liver, duodenum, ileocecum, colon and prostate. Not detected in testis, whole brain, cerebellum, fetal liver, spleen, skeletal muscle, uterus, heart or lung.

It is found in the cell membrane. Its subcellular location is the apical cell membrane. The catalysed reaction is L-alanine(in) + Na(+)(in) = L-alanine(out) + Na(+)(out). The enzyme catalyses L-cysteine(in) + Na(+)(in) = L-cysteine(out) + Na(+)(out). It catalyses the reaction L-glutamine(in) + Na(+)(in) = L-glutamine(out) + Na(+)(out). It carries out the reaction glycine(in) + Na(+)(in) = glycine(out) + Na(+)(out). The catalysed reaction is L-isoleucine(in) + Na(+)(in) = L-isoleucine(out) + Na(+)(out). The enzyme catalyses L-leucine(in) + Na(+)(in) = L-leucine(out) + Na(+)(out). It catalyses the reaction L-methionine(in) + Na(+)(in) = L-methionine(out) + Na(+)(out). It carries out the reaction L-phenylalanine(in) + Na(+)(in) = L-phenylalanine(out) + Na(+)(out). The catalysed reaction is L-serine(in) + Na(+)(in) = L-serine(out) + Na(+)(out). The enzyme catalyses L-tryptophan(in) + Na(+)(in) = L-tryptophan(out) + Na(+)(out). It catalyses the reaction L-tyrosine(in) + Na(+)(in) = L-tyrosine(out) + Na(+)(out). It carries out the reaction L-valine(in) + Na(+)(in) = L-valine(out) + Na(+)(out). Its function is as follows. Transporter that mediates resorption of neutral amino acids across the apical membrane of renal and intestinal epithelial cells. This uptake is sodium-dependent and chloride-independent. Requires CLTRN in kidney or ACE2 in intestine for cell surface expression and amino acid transporter activity. The protein is Sodium-dependent neutral amino acid transporter B(0)AT1 (SLC6A19) of Homo sapiens (Human).